We begin with the raw amino-acid sequence, 310 residues long: Ribosomal RNA small subunit methyltransferase H (310 aa).

Residues 33–35 (AGH), Asp-53, Phe-79, Asp-100, and Gln-107 each bind S-adenosyl-L-methionine.

It belongs to the methyltransferase superfamily. RsmH family.

The protein localises to the cytoplasm. The catalysed reaction is cytidine(1402) in 16S rRNA + S-adenosyl-L-methionine = N(4)-methylcytidine(1402) in 16S rRNA + S-adenosyl-L-homocysteine + H(+). Its function is as follows. Specifically methylates the N4 position of cytidine in position 1402 (C1402) of 16S rRNA. The chain is Ribosomal RNA small subunit methyltransferase H from Clostridium perfringens (strain 13 / Type A).